We begin with the raw amino-acid sequence, 642 residues long: Extracellular metalloproteinase 4 (642 aa).

Residues 1–18 form the signal peptide; that stretch reads MHGLLLAGLLALPLNVLA. Positions 19–253 are excised as a propeptide; sequence HPTESHSSGI…VHSVVDYVSA (235 aa). Over residues 49-60 the composition is skewed to polar residues; that stretch reads SDSLTGQDGQSF. Residues 49–72 form a disordered region; the sequence is SDSLTGQDGQSFTASSADADTSSG. The segment covering 61 to 71 has biased composition (low complexity); sequence TASSADADTSS. The N-linked (GlcNAc...) asparagine glycan is linked to Asn-419. His-436 contacts Zn(2+). Glu-437 is a catalytic residue. His-440 contacts Zn(2+). N-linked (GlcNAc...) asparagine glycosylation is found at Asn-509 and Asn-602.

Belongs to the peptidase M36 family. The cofactor is Zn(2+).

The protein localises to the secreted. In terms of biological role, secreted metalloproteinase that allows assimilation of proteinaceous substrates and probably acts as a virulence factor. The sequence is that of Extracellular metalloproteinase 4 (MEP4) from Arthroderma gypseum (strain ATCC MYA-4604 / CBS 118893) (Microsporum gypseum).